A 1516-amino-acid polypeptide reads, in one-letter code: UDP-glucose:glycoprotein glucosyltransferase 2 (1516 aa).

An N-terminal signal peptide occupies residues 1–27 (MAPAKATNVVRLLLGSTALWLSQLGSG). N-linked (GlcNAc...) asparagine glycosylation is found at Asn256, Asn286, Asn920, and Asn950. The segment at 1220–1516 (LHKENKKEKD…QDTILTHDEL (297 aa)) is glucosyltransferase. Tyr1289 carries the post-translational modification Phosphotyrosine. A Prevents secretion from ER motif is present at residues 1513-1516 (HDEL).

Belongs to the glycosyltransferase 8 family. Interacts with METTL23. Interacts with SELENOF. It depends on Ca(2+) as a cofactor. Mn(2+) is required as a cofactor. As to expression, higher levels in kidney, pancreas, heart, and skeletal muscle.

It localises to the endoplasmic reticulum lumen. Its subcellular location is the endoplasmic reticulum-Golgi intermediate compartment. The catalysed reaction is N(4)-(alpha-D-Man-(1-&gt;2)-alpha-D-Man-(1-&gt;2)-alpha-D-Man-(1-&gt;3)-[alpha-D-Man-(1-&gt;2)-alpha-D-Man-(1-&gt;3)-[alpha-D-Man-(1-&gt;2)-alpha-D-Man-(1-&gt;6)]-alpha-D-Man-(1-&gt;6)]-beta-D-Man-(1-&gt;4)-beta-D-GlcNAc-(1-&gt;4)-beta-D-GlcNAc)-L-asparaginyl-[protein] (N-glucan mannose isomer 9A1,2,3B1,2,3) + UDP-alpha-D-glucose = N(4)-(alpha-D-Glc-(1-&gt;3)-alpha-D-Man-(1-&gt;2)-alpha-D-Man-(1-&gt;2)-alpha-D-Man-(1-&gt;3)-[alpha-D-Man-(1-&gt;2)-alpha-D-Man-(1-&gt;3)-[alpha-D-Man-(1-&gt;2)-alpha-D-Man-(1-&gt;6)]-alpha-D-Man-(1-&gt;6)]-beta-D-Man-(1-&gt;4)-beta-D-GlcNAc-(1-&gt;4)-beta-D-GlcNAc)-L-asparaginyl-[protein] + UDP + H(+). It functions in the pathway protein modification; protein glycosylation. Its activity is regulated as follows. Ethylenediaminetetraacetic acid completely abolishes catalytic activity. Catalytic activity is enhanced by complex formation with SELENOF. Its function is as follows. Recognizes glycoproteins with minor folding defects. Reglucosylates single N-glycans near the misfolded part of the protein, thus providing quality control for protein folding in the endoplasmic reticulum. Reglucosylated proteins are recognized by calreticulin for recycling to the endoplasmic reticulum and refolding or degradation. The chain is UDP-glucose:glycoprotein glucosyltransferase 2 (UGGT2) from Homo sapiens (Human).